An 873-amino-acid chain; its full sequence is MQSTDTKEKNKNASGAVEHTPLMKQFFAAKSDYPDLLLFFRMGDFYELFYDDARKAARLLDITLTQRGSSGGAPIPMAGVPVHAYEGYLARLVALGESVAICEQIGDPALAKGLVERKVVRIVTPGTVTDEALLDERRDTLLMAISRSKHGYGLAWADLAGGRFLVNEVDSADALEAEIARLEPAELLVPDEDNWPDFLRGRTGVRRRPPWLFDADSGRRQLLAFFKLHDLSGFGIDDKPCATAAAGALLGYVEETQKQRLPHLTSIAMEVASEAISMNAATRRHLELDTRVDGDTRNTLLGVLDSTVTPMGGRLLRRWLHRPLRLRDVLLQRHHAVGTLIDAGADADLREAFRALGDLERILTRVALRSARPRDFSTLRDGLALLPKVRTILAPLDSPRLQTLHAELGEHDATAHLLISAVAETPPLKLSDGGVIATGYDAELDELRRLSTNADQFLIDLEQRERASSGIATLKVGYNRVHGYYIEISKGQAEKAPLHYSRRQTLTNAERYITEELKSFEDKVLSARERSLSREKLLYEGLLDALGTELEGLKRCAGALSELDVLAGFAERAQALDWSQPELDHAPCLRIEHGRHPVVEAVREQPFEPNDLDLHSDRRMLVITGPNMGGKSTYMRQNALIVLLAHIGSYVPASRAVIGPIDRILTRIGAGDDLARGQSTFMVEMAETSYILHHATPQSLVLMDEIGRGTSTYDGLALADAVARHLAHTNRCYTLFATHYFELTALADESHAGGASGIANVHLDAVEHGERLVFMHAVKDGPANRSFGLQVAALAGLPKAAVTQARRRLVELEQRGGESHSAQMAPTALDAPQQFGLFTAPSSAAQEALQALDPDELTPKQALEALYRLKALL.

Position 625-632 (Gly-625–Ser-632) interacts with ATP.

This sequence belongs to the DNA mismatch repair MutS family.

Its function is as follows. This protein is involved in the repair of mismatches in DNA. It is possible that it carries out the mismatch recognition step. This protein has a weak ATPase activity. This Xanthomonas euvesicatoria pv. vesicatoria (strain 85-10) (Xanthomonas campestris pv. vesicatoria) protein is DNA mismatch repair protein MutS.